Here is a 385-residue protein sequence, read N- to C-terminus: tRNA-specific 2-thiouridylase MnmA (385 aa).

Residues 12–19 and Met38 each bind ATP; that span reads GLSGGVDS. Residues 108–110 are interaction with target base in tRNA; the sequence is NPD. The Nucleophile role is filled by Cys113. The cysteines at positions 113 and 210 are disulfide-linked. Gly138 provides a ligand contact to ATP. Residues 160–162 form an interaction with tRNA region; that stretch reads KDQ. Cys210 acts as the Cysteine persulfide intermediate in catalysis.

It belongs to the MnmA/TRMU family.

Its subcellular location is the cytoplasm. It catalyses the reaction S-sulfanyl-L-cysteinyl-[protein] + uridine(34) in tRNA + AH2 + ATP = 2-thiouridine(34) in tRNA + L-cysteinyl-[protein] + A + AMP + diphosphate + H(+). Catalyzes the 2-thiolation of uridine at the wobble position (U34) of tRNA, leading to the formation of s(2)U34. The polypeptide is tRNA-specific 2-thiouridylase MnmA (Ureaplasma parvum serovar 3 (strain ATCC 27815 / 27 / NCTC 11736)).